A 664-amino-acid chain; its full sequence is Intraflagellar transport protein 70B (664 aa).

TPR repeat units follow at residues 11-44 (DGEFTAVVYRLIRDSRYSEAVQLLSAELQGSPRS), 45-78 (RAGLSLLAYCYYRLQEFELAAECYEQLSQMHPEL), 153-186 (YDGQINLGCLLYKEGHYEAACSKFLAALQASGYQ), 188-220 (DISYNLALAYYSSRQYAPALKHIADIIERGIRQ), 385-418 (LTEQLRRLTIQVQDARHSRDDESAKKAVNDYDET), 423-456 (IPVLMAQAKIYWNLENYPMVEKIFRKSVEFCNDH), and 458-491 (VWKLNVAHVLFMQENKYKEAIGFYEPIVKKNYDN). The stretch at 507-534 (YIMTSQNEEAEELMRKIEKEEEQLSYDD) forms a coiled coil. The stretch at 543 to 576 (CIVNLVIGTLYCAKGNYDFGISRVIKSLEPYHKK) is one TPR 8 repeat.

The protein belongs to the TTC30/dfy-1/fleer family. Interacts with the IFT B complex components IFT27, IFT46, IFT74, IFT52, IFT57, IFT80, IFT81 and IFT88. Interacts with KIF17.

The protein resides in the cell projection. The protein localises to the cilium. In terms of biological role, required for polyglutamylation of axonemal tubulin. Plays a role in anterograde intraflagellar transport (IFT), the process by which cilia precursors are transported from the base of the cilium to the site of their incorporation at the tip. The sequence is that of Intraflagellar transport protein 70B (Ift70b) from Rattus norvegicus (Rat).